The chain runs to 486 residues: dTDP-4-dehydro-6-deoxy-alpha-D-glucopyranose 2,3-dehydratase (486 aa).

DTDP-4-dehydro-6-deoxy-alpha-D-glucose is bound by residues Trp66, Thr149–Tyr153, Ser187, Trp304, Arg367, Gln383–Ser385, Asn388–Tyr389, and Glu421–Arg424.

This sequence belongs to the hexose 2,3-dehydratase family. In terms of assembly, homodimer.

The enzyme catalyses dTDP-4-dehydro-6-deoxy-alpha-D-glucose = dTDP-3,4-didehydro-2,6-dideoxy-alpha-D-glucose + H2O. In terms of biological role, involved in the biosynthesis of forosamine ((4-dimethylamino)-2,3,4,6-tetradeoxy-alpha-D-threo-hexopyranose), a highly deoxygenated sugar component of several bioactive natural products such as the insecticidal spinosyns A and D. Catalyzes the removal of the hydroxyl group at position C-2 of the hexose ring of dTDP-4-dehydro-6-deoxy-alpha-D-glucopyranose, and the oxidation of the hydroxyl group at position C-3 to form a carbonyl functionality. The product of the reaction, dTDP-2,6-dideoxy-D-glycero-hex-2-enos-4-ulose, is a highly unstable diketosugar, which spontaneously forms dTDP-3,4-didehydro-2,6-dideoxy-alpha-D-glucose. The chain is dTDP-4-dehydro-6-deoxy-alpha-D-glucopyranose 2,3-dehydratase from Saccharopolyspora spinosa.